A 128-amino-acid polypeptide reads, in one-letter code: Platelet basic protein (128 aa).

An N-terminal signal peptide occupies residues 1-34 (MSLRLDTTPSCNSARPLHALQVLLLLSLLLTALA). Disulfide bonds link cysteine 63-cysteine 89 and cysteine 65-cysteine 105.

This sequence belongs to the intercrine alpha (chemokine CxC) family. Beta-thromboglobulin is a homotetramer. Post-translationally, proteolytic removal of residues 1-9 produces the active peptide connective tissue-activating peptide III (CTAP-III) (low-affinity platelet factor IV (LA-PF4)). In terms of processing, proteolytic removal of residues 1-13 produces the active peptide beta-thromboglobulin, which is released from platelets along with platelet factor 4 and platelet-derived growth factor. NAP-2(1-66) is produced by proteolytical processing, probably after secretion by leukocytes other than neutrophils. Post-translationally, NAP-2(73) and NAP-2(74) seem not be produced by proteolytical processing of secreted precursors but are released in an active form from platelets.

It is found in the secreted. Functionally, LA-PF4 stimulates DNA synthesis, mitosis, glycolysis, intracellular cAMP accumulation, prostaglandin E2 secretion, and synthesis of hyaluronic acid and sulfated glycosaminoglycan. It also stimulates the formation and secretion of plasminogen activator by human synovial cells. NAP-2 is a ligand for CXCR1 and CXCR2, and NAP-2, NAP-2(73), NAP-2(74), NAP-2(1-66), and most potent NAP-2(1-63) are chemoattractants and activators for neutrophils. TC-1 and TC-2 are antibacterial proteins, in vitro released from activated platelet alpha-granules. CTAP-III(1-81) is more potent than CTAP-III desensitize chemokine-induced neutrophil activation. The protein is Platelet basic protein (PPBP) of Homo sapiens (Human).